We begin with the raw amino-acid sequence, 534 residues long: Zinc finger protein 397 (534 aa).

Serine 31 carries the post-translational modification Phosphoserine. Residues 50–132 enclose the SCAN box domain; that stretch reads RQQFRKFCYQ…TLLEDLEREF (83 aa). Residues lysine 55, lysine 171, lysine 202, and lysine 252 each participate in a glycyl lysine isopeptide (Lys-Gly) (interchain with G-Cter in SUMO2) cross-link. Residues 197 to 242 form a disordered region; that stretch reads DISGEKSQRLSQEPSFGGFSEHKSSLEWQQGSAPGETLRRSPSQRA. C2H2-type zinc fingers lie at residues 285–307, 313–335, 341–363, 369–391, 397–419, 425–447, 453–475, 481–503, and 509–531; these read YRCD…QRIH, YKCN…QRIH, YECS…RKIH, CKCN…QRIH, YECN…QRIH, YQCN…QRIH, and YICS…QRVH.

The protein belongs to the krueppel C2H2-type zinc-finger protein family.

It is found in the nucleus. Its function is as follows. DNA-dependent transcriptional repressor. This chain is Zinc finger protein 397 (ZNF397), found in Bos taurus (Bovine).